A 736-amino-acid chain; its full sequence is Serine/threonine-protein kinase BRSK2 (736 aa).

Residues 19–270 enclose the Protein kinase domain; it reads YRLEKTLGKG…LEHIQKHIWY (252 aa). Residues 25–33 and Lys48 each bind ATP; that span reads LGKGQTGLV. Catalysis depends on Asp141, which acts as the Proton acceptor. Residue Thr174 is modified to Phosphothreonine; by LKB1. The residue at position 260 (Thr260) is a Phosphothreonine; by PKA. Ser294 carries the phosphoserine modification. Positions 297 to 339 constitute a UBA domain; sequence DIDPDVLDSMHSLGCFRDRNKLLQDLLSEEENQEKMIYFLLLD. Residues 345-366 show a composition bias toward basic and acidic residues; that stretch reads PSQEDEDLPPRNEIDPPRKRVD. Disordered stretches follow at residues 345–475 and 493–513; these read PSQE…GVPW and HRRKLQVPTPEEMSNLTPESS. Phosphoserine occurs at positions 367, 382, 393, 412, 416, 423, and 427. Residues 410–428 are compositionally biased toward low complexity; that stretch reads SRSISGASSGLSTSPLSSP. Residues 431-445 show a composition bias toward pro residues; sequence TPHPSPRGSPLPTPK. Ser455 bears the Phosphoserine mark. A phosphothreonine mark is found at Thr459, Thr463, and Thr509. Ser512, Ser513, and Ser520 each carry phosphoserine. The KEN box motif lies at 603–605; sequence KEN. The segment at 681–736 is disordered; that stretch reads KNGQAAQAPSTPAKRSAHGPLGDSAAAGPGPGGDAEYPTGKDTAKMGPPTARREQP. A compositionally biased stretch (low complexity) spans 699–708; the sequence is GPLGDSAAAG.

The protein belongs to the protein kinase superfamily. CAMK Ser/Thr protein kinase family. SNF1 subfamily. Interacts with FZR1, a regulatory subunit of the APC ubiquitin ligase complex. Interacts with COPS5. Interacts with PAK1. It depends on Mg(2+) as a cofactor. Phosphorylated at Thr-174 by STK11/LKB1 in complex with STE20-related adapter-alpha (STRADA) pseudo kinase and CAB39. Not phosphorylated at Thr-174 by CaMKK2. In contrast, it is phosphorylated and activated by CaMKK1. May be inactivated via dephosphorylation of Thr-174 by PP2C. Phosphorylated at Thr-260 by PKA. Phosphorylation at Thr-260 by PKA was not observed in another study, but this may reflect differences in the experimental approach. Phosphorylation at Thr-260 seems to play a role in the regulation of insulin secretion. Post-translationally, polyubiquitinated by the APC complex in conjunction with FZR1, leading to its proteasomal degradation. Targeted for proteasomal degradation by interaction with COPS5. BRSK2 levels change during the cell cycle. BRSK2 levels are low at the G1/S boundary and gradually increase as cells progress into G2 phase. BRSK2 levels decrease rapidly at the end of mitosis. In terms of tissue distribution, detected in pancreas islets (at protein level).

Its subcellular location is the cytoplasm. The protein resides in the cytoskeleton. It localises to the microtubule organizing center. It is found in the centrosome. The protein localises to the perinuclear region. Its subcellular location is the endoplasmic reticulum. It catalyses the reaction L-seryl-[protein] + ATP = O-phospho-L-seryl-[protein] + ADP + H(+). The enzyme catalyses L-threonyl-[protein] + ATP = O-phospho-L-threonyl-[protein] + ADP + H(+). It carries out the reaction L-seryl-[tau protein] + ATP = O-phospho-L-seryl-[tau protein] + ADP + H(+). The catalysed reaction is L-threonyl-[tau protein] + ATP = O-phospho-L-threonyl-[tau protein] + ADP + H(+). Its activity is regulated as follows. Activated by phosphorylation on Thr-174 by STK11/LKB1. Serine/threonine-protein kinase that plays a key role in polarization of neurons and axonogenesis, cell cycle progress and insulin secretion. Phosphorylates CDK16, CDC25C, MAPT/TAU, PAK1 and WEE1. Following phosphorylation and activation by STK11/LKB1, acts as a key regulator of polarization of cortical neurons, probably by mediating phosphorylation of microtubule-associated proteins such as MAPT/TAU at 'Thr-529' and 'Ser-579'. Also regulates neuron polarization by mediating phosphorylation of WEE1 at 'Ser-642' in postmitotic neurons, leading to down-regulate WEE1 activity in polarized neurons. Plays a role in the regulation of the mitotic cell cycle progress and the onset of mitosis. Plays a role in the regulation of insulin secretion in response to elevated glucose levels, probably via phosphorylation of CDK16 and PAK1. While BRSK2 phosphorylated at Thr-174 can inhibit insulin secretion, BRSK2 phosphorylated at Thr-260 can promote insulin secretion. Regulates reorganization of the actin cytoskeleton. May play a role in the apoptotic response triggered by endoplasmic reticulum (ER) stress. This Homo sapiens (Human) protein is Serine/threonine-protein kinase BRSK2 (BRSK2).